Reading from the N-terminus, the 201-residue chain is Cell division protein SepF (201 aa).

Residues 1–94 form a disordered region; sequence MALKDLFSGF…TTSKNNARNV (94 aa). A compositionally biased stretch (acidic residues) spans 13-28; the sequence is VEEEDDELEAPPEENE. Residues 35-44 show a composition bias toward low complexity; that stretch reads PKQQAQSQNQ. Positions 59–88 are enriched in polar residues; the sequence is SIQSVPKKQSTRLQQSSGERKYQMNNTTSK.

It belongs to the SepF family. In terms of assembly, homodimer. Interacts with FtsZ.

The protein localises to the cytoplasm. Functionally, cell division protein that is part of the divisome complex and is recruited early to the Z-ring. Probably stimulates Z-ring formation, perhaps through the cross-linking of FtsZ protofilaments. Its function overlaps with FtsA. This Staphylococcus saprophyticus subsp. saprophyticus (strain ATCC 15305 / DSM 20229 / NCIMB 8711 / NCTC 7292 / S-41) protein is Cell division protein SepF.